The sequence spans 1389 residues: DNA-directed RNA polymerase subunit beta'' (1389 aa).

Residues Cys-224, Cys-295, Cys-302, and Cys-305 each coordinate Zn(2+).

This sequence belongs to the RNA polymerase beta' chain family. RpoC2 subfamily. As to quaternary structure, in plastids the minimal PEP RNA polymerase catalytic core is composed of four subunits: alpha, beta, beta', and beta''. When a (nuclear-encoded) sigma factor is associated with the core the holoenzyme is formed, which can initiate transcription. Zn(2+) serves as cofactor.

The protein resides in the plastid. Its subcellular location is the chloroplast. The catalysed reaction is RNA(n) + a ribonucleoside 5'-triphosphate = RNA(n+1) + diphosphate. Functionally, DNA-dependent RNA polymerase catalyzes the transcription of DNA into RNA using the four ribonucleoside triphosphates as substrates. The polypeptide is DNA-directed RNA polymerase subunit beta'' (Morus indica (Mulberry)).